A 422-amino-acid polypeptide reads, in one-letter code: Acylglycerol kinase, mitochondrial (422 aa).

At Lys-6 the chain carries N6-acetyllysine. Positions 15–31 (TTAGLCLLTWGGHWLYG) are hydrophobic. One can recognise a DAGKc domain in the interval 58-199 (AQVKKATVFL…LDVLQIKGEK (142 aa)). The tract at residues 249–271 (QASISYTGPTERPPSEPEETPVQ) is disordered.

It belongs to the AGK family. Component of the TIM22 complex, which core is composed of TIMM22, associated with TIMM10 (TIMM10A and/or TIMM10B), TIMM9, AGK and TIMM29. Interacts with SMIM26. The cofactor is Mg(2+).

The protein localises to the mitochondrion inner membrane. It localises to the mitochondrion intermembrane space. It carries out the reaction a monoacylglycerol + ATP = a monoacyl-sn-glycero-3-phosphate + ADP + H(+). The catalysed reaction is a 1,2-diacyl-sn-glycerol + ATP = a 1,2-diacyl-sn-glycero-3-phosphate + ADP + H(+). The enzyme catalyses an N-acylsphing-4-enine + ATP = an N-acylsphing-4-enine 1-phosphate + ADP + H(+). It catalyses the reaction 1-(9Z-octadecenoyl)-sn-glycerol + ATP = 1-(9Z-octadecenoyl)-sn-glycero-3-phosphate + ADP + H(+). It carries out the reaction 1,2-di-(9Z-octadecenoyl)-sn-glycerol + ATP = 1,2-di-(9Z-octadecenoyl)-sn-glycero-3-phosphate + ADP + H(+). The catalysed reaction is a 1-acyl-sn-glycerol + ATP = a 1-acyl-sn-glycero-3-phosphate + ADP + H(+). The enzyme catalyses 1-hexadecanoyl-sn-glycerol + ATP = 1-hexadecanoyl-sn-glycero-3-phosphate + ADP + H(+). It catalyses the reaction a 2-acylglycerol + ATP = a 2-acyl-sn-glycerol 3-phosphate + ADP + H(+). It carries out the reaction 2-(5Z,8Z,11Z,14Z-eicosatetraenoyl)-glycerol + ATP = 2-(5Z,8Z,11Z,14Z-eicosatetraenoyl)-sn-glycero-3-phosphate + ADP + H(+). The catalysed reaction is 1-(5Z,8Z,11Z,14Z-eicosatetraenoyl)-sn-glycerol + ATP = 1-(5Z,8Z,11Z,14Z-eicosatetraenoyl)-sn-glycero-3-phosphate + ADP + H(+). The enzyme catalyses N-(hexanoyl)sphing-4-enine + ATP = N-hexanoylsphing-4-enine 1-phosphate + ADP + H(+). Its pathway is lipid metabolism; glycerolipid metabolism. Its function is as follows. Lipid kinase that can phosphorylate both monoacylglycerol and diacylglycerol to form lysophosphatidic acid (LPA) and phosphatidic acid (PA), respectively. Phosphorylates ceramide but not sphingosine. Phosphorylates 1,2-dioleoylglycerol more rapidly than 2,3-dioleoylglycerol. Independently of its lipid kinase activity, acts as a component of the TIM22 complex. The TIM22 complex mediates the import and insertion of multi-pass transmembrane proteins into the mitochondrial inner membrane by forming a twin-pore translocase that uses the membrane potential as the external driving force. In the TIM22 complex, required for the import of a subset of metabolite carriers into mitochondria, such as ANT1/SLC25A4 and SLC25A24, while it is not required for the import of TIMM23. Overexpression increases the formation and secretion of LPA, resulting in transactivation of EGFR and activation of the downstream MAPK signaling pathway, leading to increased cell growth. This chain is Acylglycerol kinase, mitochondrial, found in Pongo abelii (Sumatran orangutan).